Here is a 241-residue protein sequence, read N- to C-terminus: Phosducin-like protein 2 (241 aa).

In terms of domain architecture, Phosducin spans 34–202; it reads VLRLQKEAMV…EWKLAEVGAI (169 aa). Residues 89 to 241 form a thioredoxin fold region; it reads FGELREISGN…DSSNSDNDTK (153 aa).

It belongs to the phosducin family. Interacts with the CCT chaperonin complex and actin. As to expression, testis-specific.

Its subcellular location is the endoplasmic reticulum. Essential for male fertility, spermiogenesis and acrosome formation. This chain is Phosducin-like protein 2 (PDCL2), found in Homo sapiens (Human).